Consider the following 228-residue polypeptide: Urease accessory protein UreF (228 aa).

This sequence belongs to the UreF family. In terms of assembly, ureD, UreF and UreG form a complex that acts as a GTP-hydrolysis-dependent molecular chaperone, activating the urease apoprotein by helping to assemble the nickel containing metallocenter of UreC. The UreE protein probably delivers the nickel.

It is found in the cytoplasm. Its function is as follows. Required for maturation of urease via the functional incorporation of the urease nickel metallocenter. The chain is Urease accessory protein UreF from Photorhabdus laumondii subsp. laumondii (strain DSM 15139 / CIP 105565 / TT01) (Photorhabdus luminescens subsp. laumondii).